A 450-amino-acid chain; its full sequence is UDP-N-acetylmuramoylalanine--D-glutamate ligase (450 aa).

116–122 (GSNGKTT) contacts ATP.

Belongs to the MurCDEF family.

The protein resides in the cytoplasm. It carries out the reaction UDP-N-acetyl-alpha-D-muramoyl-L-alanine + D-glutamate + ATP = UDP-N-acetyl-alpha-D-muramoyl-L-alanyl-D-glutamate + ADP + phosphate + H(+). The protein operates within cell wall biogenesis; peptidoglycan biosynthesis. Its function is as follows. Cell wall formation. Catalyzes the addition of glutamate to the nucleotide precursor UDP-N-acetylmuramoyl-L-alanine (UMA). In Dechloromonas aromatica (strain RCB), this protein is UDP-N-acetylmuramoylalanine--D-glutamate ligase.